We begin with the raw amino-acid sequence, 337 residues long: tRNA-cytidine(32) 2-sulfurtransferase (337 aa).

A PP-loop motif motif is present at residues 71–76; sequence SGGKDS. Cysteine 146, cysteine 149, and cysteine 237 together coordinate [4Fe-4S] cluster.

It belongs to the TtcA family. Homodimer. The cofactor is Mg(2+). It depends on [4Fe-4S] cluster as a cofactor.

The protein resides in the cytoplasm. The enzyme catalyses cytidine(32) in tRNA + S-sulfanyl-L-cysteinyl-[cysteine desulfurase] + AH2 + ATP = 2-thiocytidine(32) in tRNA + L-cysteinyl-[cysteine desulfurase] + A + AMP + diphosphate + H(+). Its pathway is tRNA modification. Its function is as follows. Catalyzes the ATP-dependent 2-thiolation of cytidine in position 32 of tRNA, to form 2-thiocytidine (s(2)C32). The sulfur atoms are provided by the cysteine/cysteine desulfurase (IscS) system. This is tRNA-cytidine(32) 2-sulfurtransferase from Burkholderia vietnamiensis (strain G4 / LMG 22486) (Burkholderia cepacia (strain R1808)).